Here is a 283-residue protein sequence, read N- to C-terminus: Acetylglutamate kinase (283 aa).

Substrate contacts are provided by residues Gly-63–Gly-64, Arg-85, and Asn-178.

It belongs to the acetylglutamate kinase family. ArgB subfamily.

The protein resides in the cytoplasm. The enzyme catalyses N-acetyl-L-glutamate + ATP = N-acetyl-L-glutamyl 5-phosphate + ADP. It participates in amino-acid biosynthesis; L-arginine biosynthesis; N(2)-acetyl-L-ornithine from L-glutamate: step 2/4. In terms of biological role, catalyzes the ATP-dependent phosphorylation of N-acetyl-L-glutamate. In Prochlorococcus marinus (strain MIT 9312), this protein is Acetylglutamate kinase.